We begin with the raw amino-acid sequence, 57 residues long: Probable antitoxin MazE1 (57 aa).

As to quaternary structure, forms a complex with cognate toxin MazF1.

Antitoxin component of a type II toxin-antitoxin (TA) system. This chain is Probable antitoxin MazE1 (mazE1), found in Mycobacterium tuberculosis (strain ATCC 25618 / H37Rv).